The chain runs to 247 residues: ATP synthase subunit a, chloroplastic (247 aa).

A run of 5 helical transmembrane segments spans residues 38-58, 95-115, 134-154, 199-219, and 220-240; these read QVLI…LIAV, VPFI…GALL, INTT…AGLS, LVVV…VMFL, and GLFT…AYIG.

Belongs to the ATPase A chain family. In terms of assembly, F-type ATPases have 2 components, CF(1) - the catalytic core - and CF(0) - the membrane proton channel. CF(1) has five subunits: alpha(3), beta(3), gamma(1), delta(1), epsilon(1). CF(0) has four main subunits: a, b, b' and c.

The protein localises to the plastid. Its subcellular location is the chloroplast thylakoid membrane. Its function is as follows. Key component of the proton channel; it plays a direct role in the translocation of protons across the membrane. This is ATP synthase subunit a, chloroplastic from Brachypodium distachyon (Purple false brome).